A 476-amino-acid chain; its full sequence is Glutamate--tRNA ligase (476 aa).

The 'HIGH' region motif lies at 9 to 19 (PSPTGKLHIGT). Residues 109 to 129 (REEQKSRNKPPRYDNRHRSLS) are compositionally biased toward basic and acidic residues. The disordered stretch occupies residues 109–133 (REEQKSRNKPPRYDNRHRSLSTEEE). Residues 248–252 (KLSKR) carry the 'KMSKS' region motif. Lysine 251 is an ATP binding site.

The protein belongs to the class-I aminoacyl-tRNA synthetase family. Glutamate--tRNA ligase type 1 subfamily. In terms of assembly, monomer.

Its subcellular location is the cytoplasm. The catalysed reaction is tRNA(Glu) + L-glutamate + ATP = L-glutamyl-tRNA(Glu) + AMP + diphosphate. Functionally, catalyzes the attachment of glutamate to tRNA(Glu) in a two-step reaction: glutamate is first activated by ATP to form Glu-AMP and then transferred to the acceptor end of tRNA(Glu). The chain is Glutamate--tRNA ligase from Prochlorococcus marinus (strain MIT 9211).